The chain runs to 470 residues: Aspartate-semialdehyde dehydrogenase 1 (470 aa).

Residues T145 and K171 each coordinate NAD(+). D243 is an active-site residue. G245 is a binding site for NAD(+). C277 is a catalytic residue. NAD(+) is bound at residue E371.

The protein belongs to the aldehyde dehydrogenase family.

It carries out the reaction L-aspartate 4-semialdehyde + NAD(+) + H2O = L-aspartate + NADH + 2 H(+). Its function is as follows. Dehydrogenase involved in the degradation of canavanine, the delta-oxa-analog of arginine, allowing growth on canavanine as sole nitrogen and carbon source. Probably catalyzes the NAD(+)-dependent oxidation of L-aspartate-semialdehyde to L-aspartate. The chain is Aspartate-semialdehyde dehydrogenase 1 from Pseudomonas canavaninivorans.